The chain runs to 118 residues: Peptidyl-prolyl cis-trans isomerase Pin1 (118 aa).

Disordered regions lie at residues 1-37 (MSSEKVRASHILIKHQGSRRKSSWKDPDGSLISATTR) and 61-84 (LASRHSHCSSAKRGGDLGPFGRGQ). Residues 3–118 (SEKVRASHIL…SGVHIIKRTG (116 aa)) form the PpiC domain. Residues 12 to 22 (LIKHQGSRRKS) show a composition bias toward basic residues.

Belongs to the PpiC/parvulin rotamase family. In terms of processing, the N-terminus is blocked. Expressed in roots, stems, leaves, flowers and seedlings.

Its subcellular location is the cytoplasm. The protein resides in the nucleus. The enzyme catalyses [protein]-peptidylproline (omega=180) = [protein]-peptidylproline (omega=0). With respect to regulation, inhibited in vitro by juglone. Functionally, prolyl cis/trans isomerase with specificity for phospho-Ser-Pro bonds. This is Peptidyl-prolyl cis-trans isomerase Pin1 (PARV12.8) from Digitalis lanata (Grecian foxglove).